The sequence spans 453 residues: Bifunctional protein GlmU (453 aa).

Positions 1 to 225 are pyrophosphorylase; the sequence is MHAHVILAAG…AEEALGVNTR (225 aa). UDP-N-acetyl-alpha-D-glucosamine is bound by residues 7–10, K21, Q72, and 77–78; these read LAAG and GT. D102 is a binding site for Mg(2+). Residues G138, E152, N167, and N223 each coordinate UDP-N-acetyl-alpha-D-glucosamine. Residue N223 coordinates Mg(2+). The tract at residues 226–246 is linker; it reads EELARVEGVLLRRLRAEWMGK. The segment at 247–453 is N-acetyltransferase; sequence GVRMILPETI…GYALRKLGEG (207 aa). UDP-N-acetyl-alpha-D-glucosamine-binding residues include R329 and K347. The active-site Proton acceptor is the H359. 2 residues coordinate UDP-N-acetyl-alpha-D-glucosamine: Y362 and N373. Residues A376, 382-383, S401, A419, and R436 each bind acetyl-CoA; that span reads NY.

It in the N-terminal section; belongs to the N-acetylglucosamine-1-phosphate uridyltransferase family. In the C-terminal section; belongs to the transferase hexapeptide repeat family. As to quaternary structure, homotrimer. The cofactor is Mg(2+).

Its subcellular location is the cytoplasm. The enzyme catalyses alpha-D-glucosamine 1-phosphate + acetyl-CoA = N-acetyl-alpha-D-glucosamine 1-phosphate + CoA + H(+). The catalysed reaction is N-acetyl-alpha-D-glucosamine 1-phosphate + UTP + H(+) = UDP-N-acetyl-alpha-D-glucosamine + diphosphate. The protein operates within nucleotide-sugar biosynthesis; UDP-N-acetyl-alpha-D-glucosamine biosynthesis; N-acetyl-alpha-D-glucosamine 1-phosphate from alpha-D-glucosamine 6-phosphate (route II): step 2/2. It functions in the pathway nucleotide-sugar biosynthesis; UDP-N-acetyl-alpha-D-glucosamine biosynthesis; UDP-N-acetyl-alpha-D-glucosamine from N-acetyl-alpha-D-glucosamine 1-phosphate: step 1/1. Its pathway is bacterial outer membrane biogenesis; LPS lipid A biosynthesis. Catalyzes the last two sequential reactions in the de novo biosynthetic pathway for UDP-N-acetylglucosamine (UDP-GlcNAc). The C-terminal domain catalyzes the transfer of acetyl group from acetyl coenzyme A to glucosamine-1-phosphate (GlcN-1-P) to produce N-acetylglucosamine-1-phosphate (GlcNAc-1-P), which is converted into UDP-GlcNAc by the transfer of uridine 5-monophosphate (from uridine 5-triphosphate), a reaction catalyzed by the N-terminal domain. The chain is Bifunctional protein GlmU from Thermus thermophilus (strain ATCC BAA-163 / DSM 7039 / HB27).